The following is a 707-amino-acid chain: Ribosomal RNA large subunit methyltransferase K/L (707 aa).

One can recognise a THUMP domain in the interval 44 to 155 (VIYNLCLWSR…NDILTVSFDL (112 aa)).

This sequence belongs to the methyltransferase superfamily. RlmKL family.

The protein localises to the cytoplasm. The enzyme catalyses guanosine(2445) in 23S rRNA + S-adenosyl-L-methionine = N(2)-methylguanosine(2445) in 23S rRNA + S-adenosyl-L-homocysteine + H(+). It carries out the reaction guanosine(2069) in 23S rRNA + S-adenosyl-L-methionine = N(2)-methylguanosine(2069) in 23S rRNA + S-adenosyl-L-homocysteine + H(+). In terms of biological role, specifically methylates the guanine in position 2445 (m2G2445) and the guanine in position 2069 (m7G2069) of 23S rRNA. This chain is Ribosomal RNA large subunit methyltransferase K/L, found in Legionella pneumophila (strain Paris).